The sequence spans 1197 residues: ATP-dependent helicase/nuclease subunit A (1197 aa).

In terms of domain architecture, UvrD-like helicase ATP-binding spans 2–458; it reads RQWTKEQQAA…IDLAKNFRSR (457 aa). Residue 23–30 coordinates ATP; that stretch reads AAAGSGKT. In terms of domain architecture, UvrD-like helicase C-terminal spans 485 to 774; the sequence is RAALYQGTEF…RIMSIHKSKG (290 aa).

Belongs to the helicase family. AddA subfamily. Heterodimer of AddA and AddB/RexB. The cofactor is Mg(2+).

It carries out the reaction Couples ATP hydrolysis with the unwinding of duplex DNA by translocating in the 3'-5' direction.. The enzyme catalyses ATP + H2O = ADP + phosphate + H(+). Its function is as follows. The heterodimer acts as both an ATP-dependent DNA helicase and an ATP-dependent, dual-direction single-stranded exonuclease. Recognizes the chi site generating a DNA molecule suitable for the initiation of homologous recombination. The AddA nuclease domain is required for chi fragment generation; this subunit has the helicase and 3' -&gt; 5' nuclease activities. This chain is ATP-dependent helicase/nuclease subunit A, found in Alkaliphilus oremlandii (strain OhILAs) (Clostridium oremlandii (strain OhILAs)).